Here is a 327-residue protein sequence, read N- to C-terminus: GrpE protein homolog 2, mitochondrial (327 aa).

Residues Met1–His39 constitute a mitochondrion transit peptide. Residues Ser68–Ser140 form a disordered region. Composition is skewed to basic and acidic residues over residues Ser75–Thr93 and Ser103–Ala113. Positions Ser130–Ser140 are enriched in acidic residues.

The protein belongs to the GrpE family. Probable component of the PAM complex, at least composed of SSC1 (mtHsp70), MGE1, TIM44, PAM16/TIM16, PAM17 and PAM18/TIM14. Interacts with SSQ1.

The protein localises to the mitochondrion matrix. In terms of biological role, essential component of the PAM complex, a complex required for the translocation of transit peptide-containing proteins from the inner membrane into the mitochondrial matrix in an ATP-dependent manner. Seems to control the nucleotide-dependent binding of mitochondrial HSP70 to substrate proteins. Binds ATP. Interacts with copper ions Cu(2+). Confers thermotolerance to long-term exposure at moderately high temperature (TMHT at 35 degrees Celsius). This chain is GrpE protein homolog 2, mitochondrial, found in Arabidopsis thaliana (Mouse-ear cress).